Reading from the N-terminus, the 297-residue chain is Transcription factor LRL3 (297 aa).

The interval 59 to 109 (PDQFHHPQESGGPTMGSQEGLQPQGTVSTTSAPVVRQKPRVRARRGQATDP) is disordered. Positions 73–90 (MGSQEGLQPQGTVSTTSA) are enriched in polar residues. Residues 105–118 (QATDPHSIAERLRR) form a basic motif; degenerate region. Residues 105–154 (QATDPHSIAERLRRERIAERMKSLQELVPNTNKTDKASMLDEIIEYVRFL) form the bHLH domain. Residues 119 to 154 (ERIAERMKSLQELVPNTNKTDKASMLDEIIEYVRFL) form a helix-loop-helix motif region.

As to quaternary structure, homodimer. In terms of tissue distribution, expressed in trichomes of the root maturation zone. Detected constitutively in flowers.

Its subcellular location is the nucleus. Functionally, transcription factor that regulates the development of root hairs. Does not seem to be involved in the regulation of sperm cell development. The chain is Transcription factor LRL3 from Arabidopsis thaliana (Mouse-ear cress).